Here is a 305-residue protein sequence, read N- to C-terminus: Ribosomal RNA large subunit methyltransferase F (305 aa).

Belongs to the methyltransferase superfamily. METTL16/RlmF family.

The protein localises to the cytoplasm. It carries out the reaction adenosine(1618) in 23S rRNA + S-adenosyl-L-methionine = N(6)-methyladenosine(1618) in 23S rRNA + S-adenosyl-L-homocysteine + H(+). In terms of biological role, specifically methylates the adenine in position 1618 of 23S rRNA. This chain is Ribosomal RNA large subunit methyltransferase F, found in Bacteroides fragilis (strain YCH46).